The following is a 394-amino-acid chain: Elongation factor Tu (394 aa).

The tr-type G domain maps to 10–204 (KPHINIGTIG…AVDDNIPTPE (195 aa)). Residues 19–26 (GHVDHGKT) form a G1 region. 19–26 (GHVDHGKT) contacts GTP. Residue Thr-26 coordinates Mg(2+). A G2 region spans residues 60–64 (GITIN). Residues 81 to 84 (DCPG) are G3. GTP is bound by residues 81–85 (DCPGH) and 136–139 (NKVD). A G4 region spans residues 136-139 (NKVD). Residues 174-176 (SAL) are G5.

This sequence belongs to the TRAFAC class translation factor GTPase superfamily. Classic translation factor GTPase family. EF-Tu/EF-1A subfamily. In terms of assembly, monomer.

It is found in the cytoplasm. It catalyses the reaction GTP + H2O = GDP + phosphate + H(+). In terms of biological role, GTP hydrolase that promotes the GTP-dependent binding of aminoacyl-tRNA to the A-site of ribosomes during protein biosynthesis. The polypeptide is Elongation factor Tu (Chlamydia pneumoniae (Chlamydophila pneumoniae)).